Here is a 348-residue protein sequence, read N- to C-terminus: UDP-N-acetylglucosamine--N-acetylmuramyl-(pentapeptide) pyrophosphoryl-undecaprenol N-acetylglucosamine transferase (348 aa).

UDP-N-acetyl-alpha-D-glucosamine contacts are provided by residues 11 to 13, Asn-120, Arg-161, Ser-187, and Gln-281; that span reads TGG.

Belongs to the glycosyltransferase 28 family. MurG subfamily.

Its subcellular location is the cell inner membrane. It carries out the reaction di-trans,octa-cis-undecaprenyl diphospho-N-acetyl-alpha-D-muramoyl-L-alanyl-D-glutamyl-meso-2,6-diaminopimeloyl-D-alanyl-D-alanine + UDP-N-acetyl-alpha-D-glucosamine = di-trans,octa-cis-undecaprenyl diphospho-[N-acetyl-alpha-D-glucosaminyl-(1-&gt;4)]-N-acetyl-alpha-D-muramoyl-L-alanyl-D-glutamyl-meso-2,6-diaminopimeloyl-D-alanyl-D-alanine + UDP + H(+). It participates in cell wall biogenesis; peptidoglycan biosynthesis. In terms of biological role, cell wall formation. Catalyzes the transfer of a GlcNAc subunit on undecaprenyl-pyrophosphoryl-MurNAc-pentapeptide (lipid intermediate I) to form undecaprenyl-pyrophosphoryl-MurNAc-(pentapeptide)GlcNAc (lipid intermediate II). This Crocosphaera subtropica (strain ATCC 51142 / BH68) (Cyanothece sp. (strain ATCC 51142)) protein is UDP-N-acetylglucosamine--N-acetylmuramyl-(pentapeptide) pyrophosphoryl-undecaprenol N-acetylglucosamine transferase.